Here is a 423-residue protein sequence, read N- to C-terminus: Glucoside xylosyltransferase 2 (423 aa).

Topologically, residues 1-6 (MRFRWK) are cytoplasmic. The helical; Signal-anchor for type II membrane protein transmembrane segment at 7–26 (FFGSLLCVTGLLLVLYRQLG) threads the bilayer. Topologically, residues 27-423 (NVPQPPPGPA…RVVVHIRSDV (397 aa)) are lumenal. The interval 60–85 (RRDARQGGKKKTNWNNVRAPEQKPNP) is disordered. N-linked (GlcNAc...) asparagine glycosylation is found at Asn215 and Asn256.

The protein belongs to the glycosyltransferase 8 family.

The protein localises to the membrane. It catalyses the reaction 3-O-(beta-D-glucosyl)-L-seryl-[EGF-like domain protein] + UDP-alpha-D-xylose = 3-O-[alpha-D-xylosyl-(1-&gt;3)-beta-D-glucosyl]-L-seryl-[EGF-like domain protein] + UDP + H(+). Its function is as follows. Glycosyltransferase which elongates the O-linked glucose attached to EGF-like repeats in the extracellular domain of Notch proteins by catalyzing the addition of xylose. The protein is Glucoside xylosyltransferase 2 (gxylt2) of Xenopus laevis (African clawed frog).